The chain runs to 546 residues: Nicotinic acid-CoA ligase olcI (546 aa).

194–205 (MFSTSGTSGLPK) is a binding site for AMP. The AMP-binding stretch occupies residues 445–523 (EIEAVLLKDP…ESLPRTGIGK (79 aa)).

Belongs to the ATP-dependent AMP-binding enzyme family.

It catalyses the reaction nicotinate + ATP + CoA = nicotinyl-CoA + AMP + diphosphate. The protein operates within secondary metabolite biosynthesis; terpenoid biosynthesis. Its function is as follows. Nicotinic acid-CoA ligase; part of the gene cluster that mediates the biosynthesis of 15-deoxyoxalicine B. The first step of the pathway is the synthesis of nicotinyl-CoA from nicotinic acid by the nicotinic acid-CoA ligase olcI. Nicotinyl-CoA is then a substrate of polyketide synthase olcA to produce 4-hydroxy-6-(3-pyridinyl)-2H-pyran-2-one (HPPO) which is further prenylated by the polyprenyl transferase olcH to yield geranylgeranyl-HPPO. Geranylgeranyl pyrophosphate is provided by the cluster-specific geranylgeranyl pyrophosphate synthase olcC. The FAD-dependent monooxygenase olcE catalyzes the epoxidation of geranylgeranyl-HPPO and the terpene cyclase olcD catalyzes the cyclization of the terpenoid component, resulting in the formation of the tricyclic terpene moiety seen in predecaturin E. The cytochrome P450 monooxygenase then catalyzes the allylic oxidation of predecaturin E, which is followed by spirocylization with concomitant loss of one molecule of water to form decaturin E. Decaturin E is the substrate of the cytochrome P450 monooxygenase olcJ which hydroxylates it at the C-29 position to form decaturin F. The short-chain dehydrogenase/reductase olcF may catalyze the oxidation of decaturin F to generate the 29-hydroxyl-27-one intermediate, and subsequent hemiacetal formation probably leads to the formation of decaturin C. The dioxygenase olcK may be a peroxisomal enzyme that catalyzes the hydroxylation of decaturin C into decaturin A once decaturin C is shuttled into the peroxisome by the MFS transporter olcL. Finally the cytochrome P450 monooxygenase olcB catalyzes the oxidative rearrangement to yield 15-deoxyoxalicine B. In the absence of olcJ, decaturin E may be shunted to a pathway in which it is oxidized to a ketone, possibly by olcF, to form decaturin D, which undergoes further allylic oxidation to yield decaturin G. Moreover, in the absence of oclK or oclL, oclB can convert decaturin C into 15-deoxyoxalicine A. The chain is Nicotinic acid-CoA ligase olcI from Penicillium canescens.